The primary structure comprises 312 residues: uncharacterized protein (312 aa).

This is an uncharacterized protein from Saccharomyces cerevisiae (strain ATCC 204508 / S288c) (Baker's yeast).